We begin with the raw amino-acid sequence, 497 residues long: ATP synthase subunit alpha 2 (497 aa).

167–174 contacts ATP; that stretch reads GERATGKT.

Belongs to the ATPase alpha/beta chains family. As to quaternary structure, F-type ATPases have 2 components, CF(1) - the catalytic core - and CF(0) - the membrane proton channel. CF(1) has five subunits: alpha(3), beta(3), gamma(1), delta(1), epsilon(1). CF(0) has four main subunits: a(1), b(1), b'(1) and c(9-12).

The protein resides in the cell inner membrane. The catalysed reaction is ATP + H2O + 4 H(+)(in) = ADP + phosphate + 5 H(+)(out). Functionally, produces ATP from ADP in the presence of a proton gradient across the membrane. The alpha chain is a regulatory subunit. This chain is ATP synthase subunit alpha 2, found in Cereibacter sphaeroides (strain ATCC 17029 / ATH 2.4.9) (Rhodobacter sphaeroides).